A 943-amino-acid polypeptide reads, in one-letter code: Aconitate hydratase A (943 aa).

Cys-479, Cys-545, and Cys-548 together coordinate [4Fe-4S] cluster.

Belongs to the aconitase/IPM isomerase family. Monomer. It depends on [4Fe-4S] cluster as a cofactor.

It catalyses the reaction citrate = D-threo-isocitrate. The enzyme catalyses (2S,3R)-3-hydroxybutane-1,2,3-tricarboxylate = 2-methyl-cis-aconitate + H2O. Its pathway is carbohydrate metabolism; tricarboxylic acid cycle; isocitrate from oxaloacetate: step 2/2. It functions in the pathway organic acid metabolism; propanoate degradation. In terms of biological role, involved in the catabolism of short chain fatty acids (SCFA) via the tricarboxylic acid (TCA)(acetyl degradation route) and probably via the 2-methylcitrate cycle I (propionate degradation route). Catalyzes the reversible isomerization of citrate to isocitrate via cis-aconitate. The apo form of AcnA functions as a RNA-binding regulatory protein which binds to selected IRE-like sequences present within the UTRs (untranslated regions) of 3' trxC and 5' IdeR mRNA. Could catalyze the hydration of 2-methyl-cis-aconitate to yield (2R,3S)-2-methylisocitrate. The chain is Aconitate hydratase A (acn) from Mycobacterium tuberculosis (strain ATCC 25618 / H37Rv).